The following is a 47-amino-acid chain: Potassium channel toxin gamma-KTx 5.1 (47 aa).

Disulfide bonds link Cys-5/Cys-23, Cys-11/Cys-34, Cys-20/Cys-39, and Cys-24/Cys-41.

It belongs to the ergtoxin family. Gamma-KTx 5 subfamily. As to expression, expressed by the venom gland.

Its subcellular location is the secreted. Reversibly blocks Kv11/ERG potassium channels. The chain is Potassium channel toxin gamma-KTx 5.1 from Centruroides sculpturatus (Arizona bark scorpion).